A 375-amino-acid polypeptide reads, in one-letter code: Putative nuclease YhcG (375 aa).

In terms of assembly, interacts with DNA processing enzymes, including the restriction complex HsdMRS, the integrases IntF and IntS, and the recombinase PinE.

In terms of biological role, may be a nuclease involved in DNA recombination and repair. The polypeptide is Putative nuclease YhcG (yhcG) (Escherichia coli (strain K12)).